A 301-amino-acid chain; its full sequence is Putative MgpC-like protein MPN_093 (301 aa).

The protein belongs to the MgpC family.

This Mycoplasma pneumoniae (strain ATCC 29342 / M129 / Subtype 1) (Mycoplasmoides pneumoniae) protein is Putative MgpC-like protein MPN_093.